Here is a 202-residue protein sequence, read N- to C-terminus: Small ribosomal subunit protein uS5 (202 aa).

The region spanning 42 to 105 (LKDEVLKIMP…ILAKLSIVPV (64 aa)) is the S5 DRBM domain. T192 carries the post-translational modification Phosphothreonine.

Belongs to the universal ribosomal protein uS5 family. In terms of assembly, component of the small ribosomal subunit. Interacts with zinc finger protein ZNF277 (via zinc-finger domains); the interaction is direct; the interaction is extra-ribosomal. Interaction with ZNF277 competes with the binding of RPS2 to protein arginine methyltransferase PRMT3. Citrullinated by PADI4 in the Arg/Gly-rich region. Post-translationally, asymmetric arginine dimethylation by PRMT3 occurs at multiple sites in the Arg/Gly-rich region. In terms of processing, monoubiquitinated by RNF10 when a ribosome has stalled during translation, leading to its degradation by the proteasome. Deubiquitinated by USP10, preventing degradation by the proteasome and promoting 40S ribosome subunit recycling following ribosome dissociation.

It is found in the cytoplasm. The protein resides in the nucleus. It localises to the nucleolus. Functionally, component of the ribosome, a large ribonucleoprotein complex responsible for the synthesis of proteins in the cell. The small ribosomal subunit (SSU) binds messenger RNAs (mRNAs) and translates the encoded message by selecting cognate aminoacyl-transfer RNA (tRNA) molecules. The large subunit (LSU) contains the ribosomal catalytic site termed the peptidyl transferase center (PTC), which catalyzes the formation of peptide bonds, thereby polymerizing the amino acids delivered by tRNAs into a polypeptide chain. The nascent polypeptides leave the ribosome through a tunnel in the LSU and interact with protein factors that function in enzymatic processing, targeting, and the membrane insertion of nascent chains at the exit of the ribosomal tunnel. Plays a role in the assembly and function of the 40S ribosomal subunit. Mutations in this protein affects the control of translational fidelity. Involved in nucleolar processing of pre-18S ribosomal RNA and ribosome assembly. The polypeptide is Small ribosomal subunit protein uS5 (RPS2) (Cricetulus griseus (Chinese hamster)).